The following is a 420-amino-acid chain: UDP-N-acetylglucosamine 1-carboxyvinyltransferase (420 aa).

22–23 contributes to the phosphoenolpyruvate binding site; that stretch reads KN. Arg-93 serves as a coordination point for UDP-N-acetyl-alpha-D-glucosamine. The active-site Proton donor is the Cys-117. A 2-(S-cysteinyl)pyruvic acid O-phosphothioketal modification is found at Cys-117. UDP-N-acetyl-alpha-D-glucosamine-binding positions include 162–165, Asp-307, and Ile-329; that span reads KVSV.

Belongs to the EPSP synthase family. MurA subfamily.

The protein resides in the cytoplasm. It carries out the reaction phosphoenolpyruvate + UDP-N-acetyl-alpha-D-glucosamine = UDP-N-acetyl-3-O-(1-carboxyvinyl)-alpha-D-glucosamine + phosphate. It participates in cell wall biogenesis; peptidoglycan biosynthesis. In terms of biological role, cell wall formation. Adds enolpyruvyl to UDP-N-acetylglucosamine. This is UDP-N-acetylglucosamine 1-carboxyvinyltransferase from Actinobacillus succinogenes (strain ATCC 55618 / DSM 22257 / CCUG 43843 / 130Z).